The following is a 324-amino-acid chain: Protein translocase subunit SecF (324 aa).

The next 6 helical transmembrane spans lie at 16–36, 145–165, 174–194, 201–221, 247–269, and 276–295; these read FFWA…ASLV, LIRS…VYIW, LGSV…FALF, TTVA…VVVF, TLSR…LVFG, and FVFA…VYMA.

The protein belongs to the SecD/SecF family. SecF subfamily. In terms of assembly, forms a complex with SecD. Part of the essential Sec protein translocation apparatus which comprises SecA, SecYEG and auxiliary proteins SecDF-YajC and YidC.

It localises to the cell inner membrane. Part of the Sec protein translocase complex. Interacts with the SecYEG preprotein conducting channel. SecDF uses the proton motive force (PMF) to complete protein translocation after the ATP-dependent function of SecA. The protein is Protein translocase subunit SecF of Cereibacter sphaeroides (strain ATCC 17023 / DSM 158 / JCM 6121 / CCUG 31486 / LMG 2827 / NBRC 12203 / NCIMB 8253 / ATH 2.4.1.) (Rhodobacter sphaeroides).